A 423-amino-acid chain; its full sequence is Imidazolonepropionase (423 aa).

His78 and His80 together coordinate Fe(3+). Zn(2+)-binding residues include His78 and His80. 4-imidazolone-5-propanoate is bound by residues Arg87, Tyr150, and His183. Tyr150 serves as a coordination point for N-formimidoyl-L-glutamate. His247 contributes to the Fe(3+) binding site. Residue His247 participates in Zn(2+) binding. Glu250 lines the 4-imidazolone-5-propanoate pocket. Fe(3+) is bound at residue Asp322. A Zn(2+)-binding site is contributed by Asp322. N-formimidoyl-L-glutamate is bound by residues Asn324 and Gly326. A 4-imidazolone-5-propanoate-binding site is contributed by Ser327.

The protein belongs to the metallo-dependent hydrolases superfamily. HutI family. Zn(2+) is required as a cofactor. Fe(3+) serves as cofactor.

The protein localises to the cytoplasm. It carries out the reaction 4-imidazolone-5-propanoate + H2O = N-formimidoyl-L-glutamate. Its pathway is amino-acid degradation; L-histidine degradation into L-glutamate; N-formimidoyl-L-glutamate from L-histidine: step 3/3. Catalyzes the hydrolytic cleavage of the carbon-nitrogen bond in imidazolone-5-propanoate to yield N-formimidoyl-L-glutamate. It is the third step in the universal histidine degradation pathway. The sequence is that of Imidazolonepropionase from Bacillus cereus (strain ATCC 14579 / DSM 31 / CCUG 7414 / JCM 2152 / NBRC 15305 / NCIMB 9373 / NCTC 2599 / NRRL B-3711).